The sequence spans 551 residues: Tetrachloroethene reductive dehalogenase (551 aa).

Residues 1 to 39 constitute a signal peptide (tat-type signal); that stretch reads MGEINRRNFLKASMLGAAAAAVASASVVKGVVSPLVADA. Residues 411–440 form the 4Fe-4S ferredoxin-type 1 domain; that stretch reads PRKFGVREFCRLCKKCADACPAQAISHEKD. 8 residues coordinate [4Fe-4S] cluster: Cys420, Cys423, Cys426, Cys430, Cys467, Cys478, Cys481, and Cys485. One can recognise a 4Fe-4S ferredoxin-type 2 domain in the interval 478 to 496; sequence CSNCVAVCSWNKVETWNHD.

Belongs to the PceA family. It depends on [4Fe-4S] cluster as a cofactor. Requires corrinoid as cofactor. Post-translationally, predicted to be exported by the Tat system. The position of the signal peptide cleavage has been experimentally proven.

It is found in the cell membrane. It carries out the reaction trichloroethene + chloride + A + H(+) = tetrachloroethene + AH2. The enzyme catalyses trichloroethene + AH2 = (Z)-1,2-dichloroethene + chloride + A + H(+). Functionally, catalyzes the reductive dechlorination of tetrachloroethene (PCE) to trichloroethene (TCE) and of trichloroethene to cis-1,2-dichloroethene (DCE). Reduced methyl viologen can act as the artificial electron donor. This chain is Tetrachloroethene reductive dehalogenase, found in Desulfitobacterium hafniense (Desulfitobacterium frappieri).